The primary structure comprises 903 residues: DNA mismatch repair protein MutS (903 aa).

The segment at 1-89 (MPRSASQPPD…DEPAWGHHSQ (89 aa)) is disordered. Low complexity-rich tracts occupy residues 20–36 (APEPAAPSATATASEPE) and 49–62 (ADAAARPRTRQATA). 719–726 (GPNASGKS) is a binding site for ATP.

This sequence belongs to the DNA mismatch repair MutS family.

In terms of biological role, this protein is involved in the repair of mismatches in DNA. It is possible that it carries out the mismatch recognition step. This protein has a weak ATPase activity. The protein is DNA mismatch repair protein MutS of Synechococcus sp. (strain CC9605).